A 523-amino-acid polypeptide reads, in one-letter code: UDP-glucuronosyltransferase 3A1 (523 aa).

The first 23 residues, 1 to 23 (MAVGRKSLILSLLIQHFVLLHGA), serve as a signal peptide directing secretion. The Extracellular segment spans residues 24–483 (KILTVCFLGG…YSYQQPLYQQ (460 aa)). Asparagine 125 carries N-linked (GlcNAc...) asparagine glycosylation. The helical transmembrane segment at 484-504 (YLLDVFLFVCVCVIGACYLTV) threads the bilayer. Over 505–523 (KLLKMFIQKLCSFRKLKQN) the chain is Cytoplasmic.

The protein belongs to the UDP-glycosyltransferase family.

The protein resides in the membrane. The enzyme catalyses glucuronate acceptor + UDP-alpha-D-glucuronate = acceptor beta-D-glucuronoside + UDP + H(+). Its function is as follows. UDP-glucuronosyltransferases catalyze phase II biotransformation reactions in which lipophilic substrates are conjugated with glucuronic acid to increase water solubility and enhance excretion. They are of major importance in the conjugation and subsequent elimination of potentially toxic xenobiotics and endogenous compounds. The sequence is that of UDP-glucuronosyltransferase 3A1 (ugt3a1) from Xenopus laevis (African clawed frog).